The sequence spans 613 residues: Ectonucleoside triphosphate diphosphohydrolase 4 (613 aa).

Topologically, residues 1 to 33 are cytoplasmic; sequence MGRIGISCLFPASWHFSISPVGCPRILNTNLRQ. Residues 34 to 54 traverse the membrane as a helical segment; that stretch reads IVVISILAAAVSLLYFSVVII. Over 55 to 559 the chain is Lumenal; that stretch reads RSKYGWLSKD…AGHAHWRGVS (505 aa). Glutamate 222 (proton acceptor) is an active-site residue. Cysteine 368 and cysteine 395 are disulfide-bonded. N-linked (GlcNAc...) asparagine glycans are attached at residues asparagine 404 and asparagine 407. Cysteine 461 and cysteine 490 form a disulfide bridge. Residues 560 to 580 form a helical membrane-spanning segment; the sequence is FVYNHYLFSGCFLVVLLSILL. Topologically, residues 581–613 are cytoplasmic; that stretch reads YLLRLRRIHRRAPRTGSLWMEEGLPSQKGPGPL.

It belongs to the GDA1/CD39 NTPase family. Requires Ca(2+) as cofactor. It depends on Mg(2+) as a cofactor. In terms of tissue distribution, ubiquitous.

It localises to the cytoplasmic vesicle. It is found in the autophagosome membrane. Its subcellular location is the lysosome membrane. The protein resides in the golgi apparatus membrane. It carries out the reaction a ribonucleoside 5'-triphosphate + H2O = a ribonucleoside 5'-diphosphate + phosphate + H(+). The catalysed reaction is a ribonucleoside 5'-diphosphate + H2O = a ribonucleoside 5'-phosphate + phosphate + H(+). It catalyses the reaction UDP + H2O = UMP + phosphate + H(+). The enzyme catalyses UTP + H2O = UDP + phosphate + H(+). It carries out the reaction CTP + H2O = CDP + phosphate + H(+). The catalysed reaction is GDP + H2O = GMP + phosphate + H(+). It catalyses the reaction 5-methyl-UTP + H2O = 5-methyl-UDP + phosphate + H(+). In terms of biological role, catalyzes the hydrolysis of nucleoside triphosphates and diphosphates in a calcium- or magnesium-dependent manner, with a preference for pyrimidines. Preferentially hydrolyzes UTP and TTP on UTP and TTP. AMP, ADP, ATP and UMP are not substrates. Preferentially activated by Ca(2+) over Mg(2+). Functionally, has a broad substrate specificity with the ability of cleaving all nucleotide di- and triphosphates with the exception of adenosine di- and triphosphate (ADP and ATP). Preferentially hydrolyzes CTP, UDP, CDP, GTP and GDP. Can use either Ca(2+) or Mg(2+) equally. The polypeptide is Ectonucleoside triphosphate diphosphohydrolase 4 (Entpd4) (Mus musculus (Mouse)).